Here is a 219-residue protein sequence, read N- to C-terminus: tRNA (guanine-N(7)-)-methyltransferase (219 aa).

Residues glutamate 43, aspartate 68, glutamate 101, and asparagine 124 each contribute to the S-adenosyl-L-methionine site. Substrate is bound by residues lysine 128 and aspartate 160.

It belongs to the class I-like SAM-binding methyltransferase superfamily. TrmB family.

The catalysed reaction is guanosine(46) in tRNA + S-adenosyl-L-methionine = N(7)-methylguanosine(46) in tRNA + S-adenosyl-L-homocysteine. It participates in tRNA modification; N(7)-methylguanine-tRNA biosynthesis. Functionally, catalyzes the formation of N(7)-methylguanine at position 46 (m7G46) in tRNA. The polypeptide is tRNA (guanine-N(7)-)-methyltransferase (Clostridium botulinum (strain Eklund 17B / Type B)).